Consider the following 1409-residue polypeptide: DNA-directed RNA polymerase subunit beta' (1409 aa).

Residues C70, C72, C85, and C88 each contribute to the Zn(2+) site. Residues D458, D460, and D462 each coordinate Mg(2+). 4 residues coordinate Zn(2+): C813, C887, C894, and C897.

This sequence belongs to the RNA polymerase beta' chain family. The RNAP catalytic core consists of 2 alpha, 1 beta, 1 beta' and 1 omega subunit. When a sigma factor is associated with the core the holoenzyme is formed, which can initiate transcription. Mg(2+) is required as a cofactor. The cofactor is Zn(2+).

The enzyme catalyses RNA(n) + a ribonucleoside 5'-triphosphate = RNA(n+1) + diphosphate. Functionally, DNA-dependent RNA polymerase catalyzes the transcription of DNA into RNA using the four ribonucleoside triphosphates as substrates. The protein is DNA-directed RNA polymerase subunit beta' of Delftia acidovorans (strain DSM 14801 / SPH-1).